The sequence spans 562 residues: Urocanate hydratase (562 aa).

NAD(+) is bound by residues 53–54 (GG), Gln131, 177–179 (GMG), Glu197, Arg202, 243–244 (NA), 268–272 (QTSAH), 278–279 (YL), and Tyr327. Residue Cys415 is part of the active site. NAD(+) is bound at residue Gly497.

It belongs to the urocanase family. The cofactor is NAD(+).

The protein resides in the cytoplasm. The enzyme catalyses 4-imidazolone-5-propanoate = trans-urocanate + H2O. It participates in amino-acid degradation; L-histidine degradation into L-glutamate; N-formimidoyl-L-glutamate from L-histidine: step 2/3. Catalyzes the conversion of urocanate to 4-imidazolone-5-propionate. The protein is Urocanate hydratase of Chelativorans sp. (strain BNC1).